Consider the following 438-residue polypeptide: Innexin inx7 (438 aa).

Topologically, residues 1–23 (MLNTFSSVRQYLKFDLTRVVIDN) are cytoplasmic. The helical transmembrane segment at 24–44 (IVFKLHYRWTFVILLVATLLI) threads the bilayer. Residues 45–58 (TSRQYIGEHIQCLS) lie on the Extracellular side of the membrane. Residues 59 to 79 (DGVVSPVINTFCFFTPTFTVV) form a helical membrane-spanning segment. Topologically, residues 80–112 (RDQNQTAYRPGSEPPGIGAFDPEKDTIKRHAYY) are cytoplasmic. A helical transmembrane segment spans residues 113–133 (QWVPFVLFFQALCFYIPHALW). The Extracellular portion of the chain corresponds to 134–283 (KSWEGGRIKA…VMALNIMNEK (150 aa)). The chain crosses the membrane as a helical span at residues 284–304 (IYIILWFWYAFLLIVTVLGLL). Topologically, residues 305–438 (WRILTLCFYR…STSDMAKLPV (134 aa)) are cytoplasmic. Disordered regions lie at residues 381–402 (NDVN…PELS) and 415–438 (RRNG…KLPV). A compositionally biased stretch (low complexity) spans 418–431 (GSPSAGGAQGPSTS).

Belongs to the pannexin family. Expressed around gut lobes in embryonic stages 15-17.

It localises to the cell membrane. The protein resides in the cell junction. The protein localises to the gap junction. Structural components of the gap junctions. The sequence is that of Innexin inx7 (Inx7) from Drosophila melanogaster (Fruit fly).